We begin with the raw amino-acid sequence, 316 residues long: Glutathione synthetase (316 aa).

Positions 123–309 (NEKISTLSFK…ISGILLDSIE (187 aa)) constitute an ATP-grasp domain. 149–206 (FQEKFGDIILKPINKMGGDSVFYVKKNDPNVSVIIDQLTNYGNSFCLIQEYIKEILNG) contacts ATP. Positions 280 and 282 each coordinate Mg(2+).

It belongs to the prokaryotic GSH synthase family. It depends on Mg(2+) as a cofactor. The cofactor is Mn(2+).

The enzyme catalyses gamma-L-glutamyl-L-cysteine + glycine + ATP = glutathione + ADP + phosphate + H(+). It functions in the pathway sulfur metabolism; glutathione biosynthesis; glutathione from L-cysteine and L-glutamate: step 2/2. The protein is Glutathione synthetase of Wigglesworthia glossinidia brevipalpis.